The sequence spans 348 residues: Phenylalanine--tRNA ligase alpha subunit (348 aa).

E268 is a binding site for Mg(2+).

The protein belongs to the class-II aminoacyl-tRNA synthetase family. Phe-tRNA synthetase alpha subunit type 1 subfamily. Tetramer of two alpha and two beta subunits. It depends on Mg(2+) as a cofactor.

The protein localises to the cytoplasm. The enzyme catalyses tRNA(Phe) + L-phenylalanine + ATP = L-phenylalanyl-tRNA(Phe) + AMP + diphosphate + H(+). This Bordetella bronchiseptica (strain ATCC BAA-588 / NCTC 13252 / RB50) (Alcaligenes bronchisepticus) protein is Phenylalanine--tRNA ligase alpha subunit.